The following is a 185-amino-acid chain: Glycerol-3-phosphate acyltransferase 4 (185 aa).

6 consecutive transmembrane segments (helical) span residues 1 to 21, 47 to 67, 69 to 89, 113 to 133, 137 to 157, and 158 to 178; these read MPLL…AYLA, LGRG…SLAI, LALA…AAVL, LLIA…VLLF, VIAA…LYGL, and PGGV…THFI.

This sequence belongs to the PlsY family. In terms of assembly, probably interacts with PlsX.

It is found in the cell membrane. It catalyses the reaction an acyl phosphate + sn-glycerol 3-phosphate = a 1-acyl-sn-glycero-3-phosphate + phosphate. It functions in the pathway lipid metabolism; phospholipid metabolism. Its function is as follows. Catalyzes the transfer of an acyl group from acyl-phosphate (acyl-PO(4)) to glycerol-3-phosphate (G3P) to form lysophosphatidic acid (LPA). This enzyme utilizes acyl-phosphate as fatty acyl donor, but not acyl-CoA or acyl-ACP. This is Glycerol-3-phosphate acyltransferase 4 from Dehalococcoides mccartyi (strain ATCC BAA-2266 / KCTC 15142 / 195) (Dehalococcoides ethenogenes (strain 195)).